Here is an 807-residue protein sequence, read N- to C-terminus: Leucine--tRNA ligase (807 aa).

A 'HIGH' region motif is present at residues 38–49 (PYPSGSGLHVGH). Residues 579-583 (KMSKS) carry the 'KMSKS' region motif. ATP is bound at residue lysine 582.

This sequence belongs to the class-I aminoacyl-tRNA synthetase family.

The protein resides in the cytoplasm. The catalysed reaction is tRNA(Leu) + L-leucine + ATP = L-leucyl-tRNA(Leu) + AMP + diphosphate. The sequence is that of Leucine--tRNA ligase from Mycoplasmopsis pulmonis (strain UAB CTIP) (Mycoplasma pulmonis).